A 126-amino-acid chain; its full sequence is Fluoride-specific ion channel FluC (126 aa).

4 consecutive transmembrane segments (helical) span residues 1–21 (MTAT…RFHA), 33–53 (AVFP…MGVL), 72–92 (VGVL…ALLV), and 97–117 (IGLA…GLFL). Gly76 and Thr79 together coordinate Na(+).

Belongs to the fluoride channel Fluc/FEX (TC 1.A.43) family.

The protein localises to the cell inner membrane. The catalysed reaction is fluoride(in) = fluoride(out). Na(+) is not transported, but it plays an essential structural role and its presence is essential for fluoride channel function. In terms of biological role, fluoride-specific ion channel. Important for reducing fluoride concentration in the cell, thus reducing its toxicity. This Novosphingobium aromaticivorans (strain ATCC 700278 / DSM 12444 / CCUG 56034 / CIP 105152 / NBRC 16084 / F199) protein is Fluoride-specific ion channel FluC.